Here is a 57-residue protein sequence, read N- to C-terminus: MAGKKGSSPNVYAYFKVDGDKVSRIKKVCSRCGKGTYMSEHKDRNTCGKCGLTEFKQ.

Residues C29, C32, C47, and C50 each contribute to the Zn(2+) site. A C4-type zinc finger spans residues 29-50 (CSRCGKGTYMSEHKDRNTCGKC).

This sequence belongs to the eukaryotic ribosomal protein eS31 family. As to quaternary structure, part of the 30S ribosomal subunit. Requires Zn(2+) as cofactor.

The sequence is that of Small ribosomal subunit protein eS31 from Nitrosopumilus maritimus (strain SCM1).